A 663-amino-acid chain; its full sequence is Protein LNK2 (663 aa).

Disordered regions lie at residues 528-549 (HYTSDTSHSNKTSQDDQEVIPR) and 590-663 (MEGP…KRKL). Over residues 602–629 (GTEEKGNFPKCSIRETHLTKQKAQKEEG) the composition is skewed to basic and acidic residues. Positions 639-648 (APNSGSSSTV) are enriched in polar residues.

Interacts with CCA1, LHY, REV4 and REV8, but not with PRR7 or PRR9. In terms of tissue distribution, expressed in roots, stems, leaves, seedlings, cotyledons, inflorescences and siliques. Highest expression in root tips, young leaves and vasculatur tissues.

Its subcellular location is the nucleus. Transcriptional coactivator necessary for expression of the clock genes PRR5 and TOC1. Antagonizes REV8 function in the regulation of anthocyanin accumulation. Involved in red light input to the clock. Activates clock-controlled genes with afternoon peak. Mediates light inhibition of hypocotyl elongation. Unable to bind to DNA, but recruited to the evening element (EE)-containing region of the PRR5 and TOC1 promoters through its interaction with the DNA binding proteins REV8 and REV4. The protein is Protein LNK2 of Arabidopsis thaliana (Mouse-ear cress).